The sequence spans 343 residues: Putative ALA-interacting subunit 2 (343 aa).

A helical membrane pass occupies residues 43–63 (PISVITVFMLMGFVFIPIGLI). Asn103, Asn178, Asn191, and Asn218 each carry an N-linked (GlcNAc...) asparagine glycan. The chain crosses the membrane as a helical span at residues 301–321 (FLGITYLVVGSSSIVISIIFM).

The protein belongs to the CDC50/LEM3 family. Expressed in roots, leaves, stems, flowers and siliques.

It localises to the membrane. This Arabidopsis thaliana (Mouse-ear cress) protein is Putative ALA-interacting subunit 2 (ALIS2).